Reading from the N-terminus, the 385-residue chain is Urotensin-2 receptor (385 aa).

Residues 1–53 (MALSLESTSFPMLAVSRSTASELPGGFNVSHNSSWTGPTDPSSLQDLVATGVI) are Extracellular-facing. N-linked (GlcNAc...) asparagine glycans are attached at residues Asn28 and Asn32. The chain crosses the membrane as a helical span at residues 54 to 76 (GAVLSTMGVVGVVGNVYTLVVMC). At 77–86 (RFLRASASMY) the chain is on the cytoplasmic side. A helical transmembrane segment spans residues 87–112 (VYVVNLALADLLYLLSIPFIVATYVT). Residues 113 to 123 (KDWHFGDVGCR) are Extracellular-facing. A disulfide bond links Cys122 and Cys198. Residues 124-145 (VLFSLDFLTMHASIFTLTIMSS) traverse the membrane as a helical segment. Topologically, residues 146–166 (ERYAAVLRPLDTVQRSKGYRK) are cytoplasmic. A helical membrane pass occupies residues 167–185 (LLALGTWLLALLLTLPMML). Topologically, residues 186–208 (AIRLVRRGSKSLCLPAWGPRAHR) are extracellular. The chain crosses the membrane as a helical span at residues 209–231 (TYLTLLFGTSIVGPGLVIGLLYI). Over 232 to 257 (RLARAYWLSQQASFKQTRRLPNPRVL) the chain is Cytoplasmic. Residues 258 to 283 (YLILGIVLLFWACFLPFWLWQLLAQY) form a helical membrane-spanning segment. Over 284 to 298 (HQAMPLTPETARIIN) the chain is Extracellular. A helical transmembrane segment spans residues 299-320 (YLTACLTYGNSCINPFLYTLLT). The Cytoplasmic segment spans residues 321 to 385 (KNYREYLRGR…SPVPPNGAFV (65 aa)).

This sequence belongs to the G-protein coupled receptor 1 family.

The protein resides in the cell membrane. Its function is as follows. High affinity receptor for urotensin-2 and urotensin-2B. The activity of this receptor is mediated by a G-protein that activate a phosphatidylinositol-calcium second messenger system. In Mus musculus (Mouse), this protein is Urotensin-2 receptor (Uts2r).